A 124-amino-acid polypeptide reads, in one-letter code: Small ribosomal subunit protein uS12 (124 aa).

D89 bears the 3-methylthioaspartic acid mark.

The protein belongs to the universal ribosomal protein uS12 family. As to quaternary structure, part of the 30S ribosomal subunit. Contacts proteins S8 and S17. May interact with IF1 in the 30S initiation complex.

Functionally, with S4 and S5 plays an important role in translational accuracy. Its function is as follows. Interacts with and stabilizes bases of the 16S rRNA that are involved in tRNA selection in the A site and with the mRNA backbone. Located at the interface of the 30S and 50S subunits, it traverses the body of the 30S subunit contacting proteins on the other side and probably holding the rRNA structure together. The combined cluster of proteins S8, S12 and S17 appears to hold together the shoulder and platform of the 30S subunit. In Blochmanniella floridana, this protein is Small ribosomal subunit protein uS12.